The following is a 367-amino-acid chain: Serine/threonine-protein kinase Sgk2 (367 aa).

A disordered region spans residues 1 to 28 (MASSPVGVPSPQPSRANGNINLGPSANP). S10 bears the Phosphoserine mark. Positions 15–28 (RANGNINLGPSANP) are enriched in polar residues. Residues 35 to 292 (FDFLKVIGKG…FLDIKNHMFF (258 aa)) form the Protein kinase domain. Residues 41-49 (IGKGNYGKV) and K64 each bind ATP. The Nuclear localization signal motif lies at 68–77 (KKSILKNKEQ). D159 functions as the Proton acceptor in the catalytic mechanism. Phosphothreonine; by PDPK1 is present on T193. Positions 293-367 (SPINWDDLYH…AQDDDDILDS (75 aa)) constitute an AGC-kinase C-terminal domain. Phosphoserine is present on residues S334 and S356. Residue Y357 is modified to Phosphotyrosine.

The protein belongs to the protein kinase superfamily. AGC Ser/Thr protein kinase family. Post-translationally, activated by phosphorylation on Ser-356 by an unknown kinase (may be mTORC2 but not confirmed), transforming it into a substrate for PDPK1 which then phosphorylates it on Thr-193. In terms of tissue distribution, expressed in the proximal tubule and thick ascending limb of the loop of Henle (TALH).

It localises to the cytoplasm. Its subcellular location is the nucleus. The enzyme catalyses L-seryl-[protein] + ATP = O-phospho-L-seryl-[protein] + ADP + H(+). It carries out the reaction L-threonyl-[protein] + ATP = O-phospho-L-threonyl-[protein] + ADP + H(+). Its activity is regulated as follows. Two specific sites, one in the kinase domain (Thr-193) and the other in the C-terminal regulatory region (Ser-356), need to be phosphorylated for its full activation. Functionally, serine/threonine-protein kinase which is involved in the regulation of a wide variety of ion channels, membrane transporters, cell growth, survival and proliferation. Up-regulates Na(+) channels: SCNN1A/ENAC, K(+) channels: KCNA3/Kv1.3, KCNE1 and KCNQ1, amino acid transporter: SLC6A19, glutamate transporter: SLC1A6/EAAT4, glutamate receptors: GRIA1/GLUR1 and GRIK2/GLUR6, Na(+)/H(+) exchanger: SLC9A3/NHE3, and the Na(+)/K(+) ATPase. The sequence is that of Serine/threonine-protein kinase Sgk2 (Sgk2) from Rattus norvegicus (Rat).